The primary structure comprises 292 residues: MYKGIVTPMITPMGQNGEIDYRATEILIDNLADFGVDGLFPMGSTGLFPMFSTDEKKKFLGFVRDHSKKIEVYAGVGSSSTQESVELSKYTEDIGIKVRVLMPTYYIKPDEDWMYRHFSTVISAASNDLFIYNIPQLSGSWISESLIEKLTREFSNVKGIKDSSGDMRFFSRIIRHKNEKFDIFQGQDDLLFLSLSIGASGGVCGLSNISPYITNLYHEFSAGNLEKARKIQIDEVNPLMYAINEATFPAGYYYAFYKMNGIKGGYRAPMVEPTTDQKKKIDQELTKIPKKQ.

Residues S44 and Y106 each act as charge relay system in the active site. The active-site Proton donor is Y132. Residue K161 is the Schiff-base intermediate with substrate of the active site.

The protein belongs to the DapA family. In terms of assembly, homotetramer.

The protein localises to the cytoplasm. This is an uncharacterized protein from Thermoplasma acidophilum (strain ATCC 25905 / DSM 1728 / JCM 9062 / NBRC 15155 / AMRC-C165).